A 120-amino-acid polypeptide reads, in one-letter code: Large ribosomal subunit protein uL18 (120 aa).

Part of the 50S ribosomal subunit; part of the 5S rRNA/L5/L18/L25 subcomplex. Contacts the 5S and 23S rRNAs.

This is one of the proteins that bind and probably mediate the attachment of the 5S RNA into the large ribosomal subunit, where it forms part of the central protuberance. The polypeptide is Large ribosomal subunit protein uL18 (Rhodopseudomonas palustris (strain ATCC BAA-98 / CGA009)).